The sequence spans 270 residues: Formamidopyrimidine-DNA glycosylase (270 aa).

Residue Pro2 is the Schiff-base intermediate with DNA of the active site. Glu3 acts as the Proton donor in catalysis. Lys58 acts as the Proton donor; for beta-elimination activity in catalysis. DNA is bound by residues His90, Arg109, and Arg152. An FPG-type zinc finger spans residues 237–270 (RVYGREGEPCQCGGVVKRIVQGGRSTFFCPRCQK). Arg260 acts as the Proton donor; for delta-elimination activity in catalysis.

It belongs to the FPG family. Monomer. It depends on Zn(2+) as a cofactor.

It carries out the reaction Hydrolysis of DNA containing ring-opened 7-methylguanine residues, releasing 2,6-diamino-4-hydroxy-5-(N-methyl)formamidopyrimidine.. The enzyme catalyses 2'-deoxyribonucleotide-(2'-deoxyribose 5'-phosphate)-2'-deoxyribonucleotide-DNA = a 3'-end 2'-deoxyribonucleotide-(2,3-dehydro-2,3-deoxyribose 5'-phosphate)-DNA + a 5'-end 5'-phospho-2'-deoxyribonucleoside-DNA + H(+). Functionally, involved in base excision repair of DNA damaged by oxidation or by mutagenic agents. Acts as a DNA glycosylase that recognizes and removes damaged bases. Has a preference for oxidized purines, such as 7,8-dihydro-8-oxoguanine (8-oxoG). Has AP (apurinic/apyrimidinic) lyase activity and introduces nicks in the DNA strand. Cleaves the DNA backbone by beta-delta elimination to generate a single-strand break at the site of the removed base with both 3'- and 5'-phosphates. This is Formamidopyrimidine-DNA glycosylase from Novosphingobium aromaticivorans (strain ATCC 700278 / DSM 12444 / CCUG 56034 / CIP 105152 / NBRC 16084 / F199).